The following is a 272-amino-acid chain: Phosphonates import ATP-binding protein PhnC (272 aa).

Residues 2–244 enclose the ABC transporter domain; it reads LVFDKVNRVY…IQKRLYEIEH (243 aa). 35 to 42 is a binding site for ATP; the sequence is GPSGAGKS.

The protein belongs to the ABC transporter superfamily. Phosphonates importer (TC 3.A.1.9.1) family. The complex is composed of two ATP-binding proteins (PhnC), two transmembrane proteins (PhnE) and a solute-binding protein (PhnD).

The protein resides in the cell inner membrane. The enzyme catalyses phosphonate(out) + ATP + H2O = phosphonate(in) + ADP + phosphate + H(+). In terms of biological role, part of the ABC transporter complex PhnCDE involved in phosphonates import. Responsible for energy coupling to the transport system. The sequence is that of Phosphonates import ATP-binding protein PhnC from Hydrogenovibrio crunogenus (strain DSM 25203 / XCL-2) (Thiomicrospira crunogena).